The primary structure comprises 451 residues: Trigger factor (451 aa).

The 86-residue stretch at 165-250 folds into the PPIase FKBP-type domain; sequence DDKLTIDFEG…LHQIQAREAL (86 aa).

This sequence belongs to the FKBP-type PPIase family. Tig subfamily.

It is found in the cytoplasm. It catalyses the reaction [protein]-peptidylproline (omega=180) = [protein]-peptidylproline (omega=0). Its function is as follows. Involved in protein export. Acts as a chaperone by maintaining the newly synthesized protein in an open conformation. Functions as a peptidyl-prolyl cis-trans isomerase. This Helicobacter pylori (strain G27) protein is Trigger factor.